The primary structure comprises 352 residues: N-acetyl-gamma-glutamyl-phosphate reductase (352 aa).

Cys155 is a catalytic residue.

Belongs to the NAGSA dehydrogenase family. Type 1 subfamily.

The protein localises to the cytoplasm. It carries out the reaction N-acetyl-L-glutamate 5-semialdehyde + phosphate + NADP(+) = N-acetyl-L-glutamyl 5-phosphate + NADPH + H(+). It participates in amino-acid biosynthesis; L-arginine biosynthesis; N(2)-acetyl-L-ornithine from L-glutamate: step 3/4. In terms of biological role, catalyzes the NADPH-dependent reduction of N-acetyl-5-glutamyl phosphate to yield N-acetyl-L-glutamate 5-semialdehyde. In Crocosphaera subtropica (strain ATCC 51142 / BH68) (Cyanothece sp. (strain ATCC 51142)), this protein is N-acetyl-gamma-glutamyl-phosphate reductase.